The primary structure comprises 86 residues: UPF0125 protein bbp_234 (86 aa).

The protein belongs to the UPF0125 (RnfH) family.

The protein is UPF0125 protein bbp_234 of Buchnera aphidicola subsp. Baizongia pistaciae (strain Bp).